A 272-amino-acid polypeptide reads, in one-letter code: L-aspartate dehydrogenase (272 aa).

NAD(+)-binding residues include alanine 125 and asparagine 192. Histidine 222 is a catalytic residue.

The protein belongs to the L-aspartate dehydrogenase family.

The enzyme catalyses L-aspartate + NADP(+) + H2O = oxaloacetate + NH4(+) + NADPH + H(+). The catalysed reaction is L-aspartate + NAD(+) + H2O = oxaloacetate + NH4(+) + NADH + H(+). It functions in the pathway cofactor biosynthesis; NAD(+) biosynthesis; iminoaspartate from L-aspartate (dehydrogenase route): step 1/1. Specifically catalyzes the NAD or NADP-dependent dehydrogenation of L-aspartate to iminoaspartate. This Nitrosopumilus maritimus (strain SCM1) protein is L-aspartate dehydrogenase.